Consider the following 343-residue polypeptide: Mas-related G-protein coupled receptor member F (343 aa).

Residues 1–44 (MAGNCSWEAHSTNQNKMCPGMSEARELYSRGFLTIEQIATLPPP) lie on the Extracellular side of the membrane. A glycan (N-linked (GlcNAc...) asparagine) is linked at asparagine 4. A helical transmembrane segment spans residues 45–66 (AVTNYIFLLLCLCGLVGNGLVL). The Cytoplasmic portion of the chain corresponds to 67-82 (WFFGFSIKRTPFSIYF). A helical membrane pass occupies residues 83-104 (LHLASADGMYLFSKAVIALLNM). Residues 105–123 (GTFLGSFPDYIRRVSRIVG) are Extracellular-facing. Residues 124–144 (LCTFFTGVSLLPAISIERCVS) traverse the membrane as a helical segment. The Cytoplasmic portion of the chain corresponds to 145–160 (VIFPTWYWRRRPKRLS). A helical transmembrane segment spans residues 161 to 181 (AGVCALLWMLSFLVTSIHNYF). The Extracellular segment spans residues 182-198 (CMFLGHEAPGTVCRNMD). A helical transmembrane segment spans residues 199-220 (IALGILLFFLFCPLMVLPCLAL). Residues 221 to 241 (ILHVECRARRRQRSAKLNHVV) lie on the Cytoplasmic side of the membrane. The chain crosses the membrane as a helical span at residues 242-263 (LAIVSVFLVSSIYLGIDWFLFW). Over 264-273 (VFQIPAPFPE) the chain is Extracellular. A helical transmembrane segment spans residues 274-294 (YVTDLCICINSSAKPIVYFLA). Residues 295–343 (GRDKSQRLWEPLRVVFQRALRDGAEPGDAASSTPNTVTMEMQCPSGNAS) lie on the Cytoplasmic side of the membrane. Positions 318-343 (AEPGDAASSTPNTVTMEMQCPSGNAS) are disordered. Polar residues predominate over residues 324 to 343 (ASSTPNTVTMEMQCPSGNAS).

The protein belongs to the G-protein coupled receptor 1 family. Mas subfamily.

The protein resides in the cell membrane. Its function is as follows. Orphan receptor. May bind to a neuropeptide and may regulate nociceptor function and/or development, including the sensation or modulation of pain. This is Mas-related G-protein coupled receptor member F (Mrgprf) from Mus musculus (Mouse).